The following is a 330-amino-acid chain: NADH-quinone oxidoreductase subunit H (330 aa).

A run of 8 helical transmembrane segments spans residues 5–25, 78–98, 120–140, 155–175, 191–211, 243–263, 271–291, and 308–328; these read LLTL…VLTL, WVFM…FAVI, IGLL…ALGG, AMAQ…PVVM, SLPN…AIMA, FFVG…VLFL, LPGI…FIWV, and WKIL…WLIW.

It belongs to the complex I subunit 1 family. NDH-1 is composed of 14 different subunits. Subunits NuoA, H, J, K, L, M, N constitute the membrane sector of the complex.

It is found in the cell inner membrane. It carries out the reaction a quinone + NADH + 5 H(+)(in) = a quinol + NAD(+) + 4 H(+)(out). NDH-1 shuttles electrons from NADH, via FMN and iron-sulfur (Fe-S) centers, to quinones in the respiratory chain. The immediate electron acceptor for the enzyme in this species is believed to be ubiquinone. Couples the redox reaction to proton translocation (for every two electrons transferred, four hydrogen ions are translocated across the cytoplasmic membrane), and thus conserves the redox energy in a proton gradient. This subunit may bind ubiquinone. The sequence is that of NADH-quinone oxidoreductase subunit H from Syntrophotalea carbinolica (strain DSM 2380 / NBRC 103641 / GraBd1) (Pelobacter carbinolicus).